Reading from the N-terminus, the 217-residue chain is Neuron-specific vesicular protein calcyon (217 aa).

Residues 1-25 form a disordered region; that stretch reads MVKLGCSFSGKPGKDPGDQDGAAMD. The Extracellular portion of the chain corresponds to 1 to 87; sequence MVKLGCSFSG…EEGRRLPTAR (87 aa). N-linked (GlcNAc...) asparagine glycosylation occurs at Asn-73. A helical transmembrane segment spans residues 88–108; that stretch reads MIAFAMALLGCVLIMYKAIWY. The Cytoplasmic portion of the chain corresponds to 109-217; that stretch reads DQFTCPDGFL…AGSAAPPPAQ (109 aa). Positions 162–217 are disordered; that stretch reads PAAWGDGYRAAKEERKGPTQAGAAAAATEPPGKPSAKAEKEAARKAAGSAAPPPAQ.

It belongs to the NSG family. Interacts with CLTA. Glycosylated. Expressed in the pyramidal cells of the prefrontal cortex, in hypothalamus and in caudate nucleus. No expression in spleen. Up-regulated in the prefrontal cortex of schizophrenic patients with nearly twice the levels of non-schizophrenics.

The protein localises to the cytoplasmic vesicle membrane. Its subcellular location is the cell membrane. Interacts with clathrin light chain A and stimulates clathrin self-assembly and clathrin-mediated endocytosis. This is Neuron-specific vesicular protein calcyon (CALY) from Homo sapiens (Human).